The primary structure comprises 395 residues: Ribosomal RNA small subunit methyltransferase H (395 aa).

Residues 101–103, aspartate 120, tyrosine 147, aspartate 171, and glutamine 178 each bind S-adenosyl-L-methionine; that span reads GGH.

This sequence belongs to the methyltransferase superfamily. RsmH family.

The protein localises to the cytoplasm. It carries out the reaction cytidine(1402) in 16S rRNA + S-adenosyl-L-methionine = N(4)-methylcytidine(1402) in 16S rRNA + S-adenosyl-L-homocysteine + H(+). In terms of biological role, specifically methylates the N4 position of cytidine in position 1402 (C1402) of 16S rRNA. This chain is Ribosomal RNA small subunit methyltransferase H, found in Mycobacterium marinum (strain ATCC BAA-535 / M).